A 321-amino-acid polypeptide reads, in one-letter code: Phosphate-import protein PhnD (321 aa).

The first 22 residues, 1–22 (MKIRAHHKIATAAACVALLASA), serve as a signal peptide directing secretion. A lipid anchor (N-palmitoyl cysteine) is attached at cysteine 23. Cysteine 23 carries S-diacylglycerol cysteine lipidation.

This sequence belongs to the phosphate/phosphite/phosphonate binding protein family. The complex is composed of two ATP-binding proteins (PhnC), two transmembrane proteins (PhnE) and a solute-binding protein (PhnD).

The protein resides in the cell membrane. Functionally, part of the ABC transporter complex PhnCDE involved in phosphate import. Responsible for phosphate binding. The protein is Phosphate-import protein PhnD (phnD) of Mycolicibacterium smegmatis (strain ATCC 700084 / mc(2)155) (Mycobacterium smegmatis).